The sequence spans 269 residues: Ribosomal RNA small subunit methyltransferase A (269 aa).

S-adenosyl-L-methionine contacts are provided by isoleucine 17, glycine 42, glutamate 64, aspartate 89, and asparagine 109.

This sequence belongs to the class I-like SAM-binding methyltransferase superfamily. rRNA adenine N(6)-methyltransferase family. RsmA subfamily.

The protein localises to the cytoplasm. The catalysed reaction is adenosine(1518)/adenosine(1519) in 16S rRNA + 4 S-adenosyl-L-methionine = N(6)-dimethyladenosine(1518)/N(6)-dimethyladenosine(1519) in 16S rRNA + 4 S-adenosyl-L-homocysteine + 4 H(+). In terms of biological role, specifically dimethylates two adjacent adenosines (A1518 and A1519) in the loop of a conserved hairpin near the 3'-end of 16S rRNA in the 30S particle. May play a critical role in biogenesis of 30S subunits. This Anaplasma phagocytophilum (strain HZ) protein is Ribosomal RNA small subunit methyltransferase A.